A 214-amino-acid polypeptide reads, in one-letter code: Urease accessory protein UreG 2 (214 aa).

22–29 (GPVGSGKT) contacts GTP.

This sequence belongs to the SIMIBI class G3E GTPase family. UreG subfamily. Homodimer. UreD, UreF and UreG form a complex that acts as a GTP-hydrolysis-dependent molecular chaperone, activating the urease apoprotein by helping to assemble the nickel containing metallocenter of UreC. The UreE protein probably delivers the nickel.

It is found in the cytoplasm. Its function is as follows. Facilitates the functional incorporation of the urease nickel metallocenter. This process requires GTP hydrolysis, probably effectuated by UreG. This chain is Urease accessory protein UreG 2, found in Bradyrhizobium sp. (strain BTAi1 / ATCC BAA-1182).